The primary structure comprises 562 residues: Septation ring formation regulator EzrA (562 aa).

The Extracellular portion of the chain corresponds to 1-2 (ME). A helical membrane pass occupies residues 3-21 (FVIGLLIVLLALFAAGYFF). Residues 22 to 562 (RKKIYAEIDR…VEKIKADISA (541 aa)) are Cytoplasmic-facing. 2 coiled-coil regions span residues 377-425 (YSLL…LKKT) and 470-497 (MEEAGAHLKQAEDIVNRASRESEELVEQ).

It belongs to the EzrA family. In terms of processing, may be degraded by FtsH protease.

The protein resides in the cell membrane. It is found in the membrane raft. Functionally, negative regulator of FtsZ ring formation; modulates the frequency and position of FtsZ ring formation. Inhibits FtsZ ring formation at polar sites. Interacts either with FtsZ or with one of its binding partners to promote depolymerization. In Bacillus subtilis (strain 168), this protein is Septation ring formation regulator EzrA.